A 310-amino-acid chain; its full sequence is GTPase Era (310 aa).

Positions R17 to E184 constitute an Era-type G domain. A G1 region spans residues G25–S32. G25–S32 contributes to the GTP binding site. Positions Q51 to A55 are G2. Residues D72 to G75 form a G3 region. Residues D72–I76 and N134–D137 contribute to the GTP site. The interval N134–D137 is G4. A G5 region spans residues I163–A165. In terms of domain architecture, KH type-2 spans L215–E292.

Belongs to the TRAFAC class TrmE-Era-EngA-EngB-Septin-like GTPase superfamily. Era GTPase family. In terms of assembly, monomer.

The protein resides in the cytoplasm. Its subcellular location is the cell inner membrane. Its function is as follows. An essential GTPase that binds both GDP and GTP, with rapid nucleotide exchange. Plays a role in 16S rRNA processing and 30S ribosomal subunit biogenesis and possibly also in cell cycle regulation and energy metabolism. This Sinorhizobium medicae (strain WSM419) (Ensifer medicae) protein is GTPase Era.